The following is an 83-amino-acid chain: Alpha-neurotoxin NTX-2 (83 aa).

An N-terminal signal peptide occupies residues 1–21 (MKTLLLTLLVVTIVCLDLGYT). 4 disulfides stabilise this stretch: Cys24-Cys45, Cys38-Cys62, Cys64-Cys75, and Cys76-Cys81.

This sequence belongs to the three-finger toxin family. Short-chain subfamily. Type I alpha-neurotoxin sub-subfamily. As to expression, expressed by the venom gland.

The protein localises to the secreted. Functionally, binds to muscle nicotinic acetylcholine receptor (nAChR) and inhibit acetylcholine from binding to the receptor, thereby impairing neuromuscular transmission. The sequence is that of Alpha-neurotoxin NTX-2 from Naja sputatrix (Malayan spitting cobra).